The primary structure comprises 198 residues: Recombination protein RecR (198 aa).

The C4-type zinc-finger motif lies at 59–74 (CSLCCNYTDHDPCPIC). The 94-residue stretch at 82–175 (TLLCIVEQPR…KVTRIAHGLP (94 aa)) folds into the Toprim domain.

This sequence belongs to the RecR family.

Its function is as follows. May play a role in DNA repair. It seems to be involved in an RecBC-independent recombinational process of DNA repair. It may act with RecF and RecO. This chain is Recombination protein RecR, found in Desulfitobacterium hafniense (strain Y51).